The chain runs to 160 residues: S-ribosylhomocysteine lyase (160 aa).

His57, His61, and Cys127 together coordinate Fe cation.

This sequence belongs to the LuxS family. In terms of assembly, homodimer. It depends on Fe cation as a cofactor.

It catalyses the reaction S-(5-deoxy-D-ribos-5-yl)-L-homocysteine = (S)-4,5-dihydroxypentane-2,3-dione + L-homocysteine. In terms of biological role, involved in the synthesis of autoinducer 2 (AI-2) which is secreted by bacteria and is used to communicate both the cell density and the metabolic potential of the environment. The regulation of gene expression in response to changes in cell density is called quorum sensing. Catalyzes the transformation of S-ribosylhomocysteine (RHC) to homocysteine (HC) and 4,5-dihydroxy-2,3-pentadione (DPD). This is S-ribosylhomocysteine lyase from Streptococcus uberis (strain ATCC BAA-854 / 0140J).